The chain runs to 410 residues: S-adenosylmethionine synthase (410 aa).

His-21 is an ATP binding site. Asp-23 lines the Mg(2+) pocket. Residue Glu-49 participates in K(+) binding. The L-methionine site is built by Glu-62 and Gln-105. The tract at residues 105 to 115 (QSQEIGAGVDQ) is flexible loop. The segment at 107-133 (QEIGAGVDQSHEVRSGENTDADDQAGA) is disordered. ATP contacts are provided by residues 180–182 (DGK), Asp-261, 267–268 (RK), Ala-284, and Lys-288. Asp-261 contributes to the L-methionine binding site. L-methionine is bound at residue Lys-292.

It belongs to the AdoMet synthase family. As to quaternary structure, homotetramer; dimer of dimers. Mg(2+) serves as cofactor. The cofactor is K(+).

It localises to the cytoplasm. The enzyme catalyses L-methionine + ATP + H2O = S-adenosyl-L-methionine + phosphate + diphosphate. Its pathway is amino-acid biosynthesis; S-adenosyl-L-methionine biosynthesis; S-adenosyl-L-methionine from L-methionine: step 1/1. Its function is as follows. Catalyzes the formation of S-adenosylmethionine (AdoMet) from methionine and ATP. The overall synthetic reaction is composed of two sequential steps, AdoMet formation and the subsequent tripolyphosphate hydrolysis which occurs prior to release of AdoMet from the enzyme. The protein is S-adenosylmethionine synthase of Corynebacterium diphtheriae (strain ATCC 700971 / NCTC 13129 / Biotype gravis).